The primary structure comprises 430 residues: Enolase (430 aa).

Gln167 serves as a coordination point for (2R)-2-phosphoglycerate. Glu209 (proton donor) is an active-site residue. Asp246, Glu289, and Asp316 together coordinate Mg(2+). (2R)-2-phosphoglycerate-binding residues include Lys341, Arg370, Ser371, and Lys392. Residue Lys341 is the Proton acceptor of the active site.

The protein belongs to the enolase family. Component of the RNA degradosome, a multiprotein complex involved in RNA processing and mRNA degradation. It depends on Mg(2+) as a cofactor.

The protein localises to the cytoplasm. The protein resides in the secreted. It is found in the cell surface. The catalysed reaction is (2R)-2-phosphoglycerate = phosphoenolpyruvate + H2O. Its pathway is carbohydrate degradation; glycolysis; pyruvate from D-glyceraldehyde 3-phosphate: step 4/5. In terms of biological role, catalyzes the reversible conversion of 2-phosphoglycerate (2-PG) into phosphoenolpyruvate (PEP). It is essential for the degradation of carbohydrates via glycolysis. This is Enolase from Idiomarina loihiensis (strain ATCC BAA-735 / DSM 15497 / L2-TR).